We begin with the raw amino-acid sequence, 91 residues long: Long neurotoxin OH-57 (91 aa).

The signal sequence occupies residues 1-21 (MKTLLLTLVVVTIVCLDLGYT). 5 disulfide bridges follow: Cys24–Cys41, Cys34–Cys62, Cys47–Cys51, Cys66–Cys77, and Cys78–Cys83.

The protein belongs to the three-finger toxin family. Long-chain subfamily. Type II alpha-neurotoxin sub-subfamily. As to expression, expressed by the venom gland.

Its subcellular location is the secreted. Binds with high affinity to muscular (alpha-1/CHRNA1) and neuronal (alpha-7/CHRNA7) nicotinic acetylcholine receptor (nAChR) and inhibits acetylcholine from binding to the receptor, thereby impairing neuromuscular and neuronal transmission. This chain is Long neurotoxin OH-57, found in Ophiophagus hannah (King cobra).